The sequence spans 632 residues: Threonine--tRNA ligase (632 aa).

The region spanning 1-61 (MPIVTLPDGS…EHDAEVSILT (61 aa)) is the TGS domain. The segment at 242–533 (DHRKLARKLD…LIEHYAGSMP (292 aa)) is catalytic. Cys333, His384, and His510 together coordinate Zn(2+).

This sequence belongs to the class-II aminoacyl-tRNA synthetase family. As to quaternary structure, homodimer. The cofactor is Zn(2+).

The protein localises to the cytoplasm. The enzyme catalyses tRNA(Thr) + L-threonine + ATP = L-threonyl-tRNA(Thr) + AMP + diphosphate + H(+). Functionally, catalyzes the attachment of threonine to tRNA(Thr) in a two-step reaction: L-threonine is first activated by ATP to form Thr-AMP and then transferred to the acceptor end of tRNA(Thr). Also edits incorrectly charged L-seryl-tRNA(Thr). In Chromohalobacter salexigens (strain ATCC BAA-138 / DSM 3043 / CIP 106854 / NCIMB 13768 / 1H11), this protein is Threonine--tRNA ligase.